A 376-amino-acid chain; its full sequence is Homeobox protein extradenticle (376 aa).

A disordered region spans residues 1–37; sequence MEDPNRMLAHTGGMMAPQGYGLSGQDDGQNAGSENEV. A PBC domain is found at 38-237; the sequence is RKQKDIGEIL…VMILRSRFLD (200 aa). The segment at 45 to 124 is PBC-A; the sequence is EILQQIMSIS…EGVAGPEKGG (80 aa). The segment at 127–237 is PBC-B; that stretch reads AAAASAAAAS…VMILRSRFLD (111 aa). A DNA-binding region (homeobox; TALE-type) is located at residues 238–300; that stretch reads ARRKRRNFSK…NKRIRYKKNI (63 aa). Positions 318–335 are enriched in low complexity; that stretch reads ASPYSMAGPPSGTTTPMM. The tract at residues 318–376 is disordered; it reads ASPYSMAGPPSGTTTPMMSPAPPQDSMGYPMGSGGYDQQQPYDNSMGGYDPNLHQDLSP.

Belongs to the TALE/PBX homeobox family. As to quaternary structure, interacts with Ubx and hth. As to expression, prior to full germband retraction it is ubiquitously present, after germband retraction, mostly present in the anterior portion of the ventral nerve cord.

Its subcellular location is the nucleus. Its function is as follows. Transcription factor which acts with the selector homeodomain proteins altering the regulation of downstream target genes such as wingless (wg), teashirt (tsh) and decapentaplegic (dpp), thus affecting segmental identity. Delimits the eye field and prevent inappropriate eye development. Required for proper localization of chordotonal organs within the peripheral nervous system. This Drosophila melanogaster (Fruit fly) protein is Homeobox protein extradenticle (exd).